The chain runs to 190 residues: Orotate phosphoribosyltransferase (190 aa).

114–122 (EDVVTTGGS) lines the 5-phospho-alpha-D-ribose 1-diphosphate pocket. Residues T118 and R146 each coordinate orotate.

Belongs to the purine/pyrimidine phosphoribosyltransferase family. PyrE subfamily. In terms of assembly, homodimer. Mg(2+) is required as a cofactor.

It catalyses the reaction orotidine 5'-phosphate + diphosphate = orotate + 5-phospho-alpha-D-ribose 1-diphosphate. It participates in pyrimidine metabolism; UMP biosynthesis via de novo pathway; UMP from orotate: step 1/2. Catalyzes the transfer of a ribosyl phosphate group from 5-phosphoribose 1-diphosphate to orotate, leading to the formation of orotidine monophosphate (OMP). The polypeptide is Orotate phosphoribosyltransferase (Caldanaerobacter subterraneus subsp. tengcongensis (strain DSM 15242 / JCM 11007 / NBRC 100824 / MB4) (Thermoanaerobacter tengcongensis)).